Consider the following 198-residue polypeptide: MKLYSLSVLYKGEAKVVLLKAAYDVSSFSFFQRSSVQEFMTFTSQLIVERSSKGTRASVKEQDYLCHVYVRNDSLAGVVIADNEYPSRVAFTLLEKVLDEFSKQVDRIDWPVGSPATIHYPALDGHLSRYQNPREADPMTKVQAELDETKIILHNTMESLLERGEKLDDLVSKSEVLGTQSKAFYKTARKQNSCCAIM.

Residues 8 to 126 (VLYKGEAKVV…TIHYPALDGH (119 aa)) enclose the Longin domain. The v-SNARE coiled-coil homology domain maps to 138 to 198 (PMTKVQAELD…RKQNSCCAIM (61 aa)). Ser-159 carries the post-translational modification Phosphoserine. A lipid anchor (S-palmitoyl cysteine) is attached at Cys-194. The residue at position 195 (Cys-195) is a Cysteine methyl ester. The S-farnesyl cysteine moiety is linked to residue Cys-195. Positions 196–198 (AIM) are cleaved as a propeptide — removed in mature form.

The protein belongs to the synaptobrevin family. Identified in 2 different SNARE complexes; the first one composed of GOSR1, GOSR2 and STX5 and the second one composed of BET1L, GOSR1 and STX5. Post-translationally, palmitoylated; catalyzes its own palmitoylation. Palmitoylation is required for Golgi targeting. Farnesylation is required for Golgi targeting.

It localises to the cytoplasm. The protein localises to the cytosol. The protein resides in the cytoplasmic vesicle membrane. It is found in the golgi apparatus membrane. Vesicular soluble NSF attachment protein receptor (v-SNARE) mediating vesicle docking and fusion to a specific acceptor cellular compartment. Functions in endoplasmic reticulum to Golgi transport; as part of a SNARE complex composed of GOSR1, GOSR2 and STX5. Functions in early/recycling endosome to TGN transport; as part of a SNARE complex composed of BET1L, GOSR1 and STX5. Has a S-palmitoyl transferase activity. This is Synaptobrevin homolog YKT6 (YKT6) from Homo sapiens (Human).